Here is a 100-residue protein sequence, read N- to C-terminus: UPF0045 protein MJ1052 (100 aa).

This sequence belongs to the UPF0045 family.

This is UPF0045 protein MJ1052 from Methanocaldococcus jannaschii (strain ATCC 43067 / DSM 2661 / JAL-1 / JCM 10045 / NBRC 100440) (Methanococcus jannaschii).